A 566-amino-acid polypeptide reads, in one-letter code: Glutamate--tRNA ligase (566 aa).

The 'HIGH' region motif lies at 93–103; it reads PNPDYTIHLGN.

This sequence belongs to the class-I aminoacyl-tRNA synthetase family. Glutamate--tRNA ligase type 2 subfamily.

It localises to the cytoplasm. The catalysed reaction is tRNA(Glu) + L-glutamate + ATP = L-glutamyl-tRNA(Glu) + AMP + diphosphate. In terms of biological role, catalyzes the attachment of glutamate to tRNA(Glu) in a two-step reaction: glutamate is first activated by ATP to form Glu-AMP and then transferred to the acceptor end of tRNA(Glu). This Staphylothermus marinus (strain ATCC 43588 / DSM 3639 / JCM 9404 / F1) protein is Glutamate--tRNA ligase.